The chain runs to 33 residues: Photosystem II reaction center protein Psb30 (33 aa).

The chain crosses the membrane as a helical span at residues 5–25; sequence VILQLGSILLVVAAGPLVIVL.

Belongs to the Psb30/Ycf12 family. As to quaternary structure, PSII is composed of 1 copy each of membrane proteins PsbA, PsbB, PsbC, PsbD, PsbE, PsbF, PsbH, PsbI, PsbJ, PsbK, PsbL, PsbM, PsbT, PsbX, PsbY, PsbZ, Psb30/Ycf12, peripheral proteins of the oxygen-evolving complex and a large number of cofactors. It forms dimeric complexes.

It is found in the plastid. The protein localises to the chloroplast thylakoid membrane. A core subunit of photosystem II (PSII), probably helps stabilize the reaction center. In Oltmannsiellopsis viridis (Marine flagellate), this protein is Photosystem II reaction center protein Psb30.